We begin with the raw amino-acid sequence, 185 residues long: Alcohol dehydrogenase 1 (185 aa).

NAD(+) contacts are provided by residues 10-15 (GLGGVG), aspartate 34, lysine 39, 103-105 (VGV), and arginine 180.

Belongs to the zinc-containing alcohol dehydrogenase family. Class-I subfamily. In terms of assembly, homodimer. Zn(2+) is required as a cofactor.

The protein resides in the cytoplasm. The enzyme catalyses a primary alcohol + NAD(+) = an aldehyde + NADH + H(+). The catalysed reaction is a secondary alcohol + NAD(+) = a ketone + NADH + H(+). This chain is Alcohol dehydrogenase 1 (ADH1), found in Anas platyrhynchos (Mallard).